We begin with the raw amino-acid sequence, 606 residues long: Proline--tRNA ligase (606 aa).

It belongs to the class-II aminoacyl-tRNA synthetase family. ProS type 1 subfamily. Homodimer.

The protein resides in the cytoplasm. It carries out the reaction tRNA(Pro) + L-proline + ATP = L-prolyl-tRNA(Pro) + AMP + diphosphate. Catalyzes the attachment of proline to tRNA(Pro) in a two-step reaction: proline is first activated by ATP to form Pro-AMP and then transferred to the acceptor end of tRNA(Pro). As ProRS can inadvertently accommodate and process non-cognate amino acids such as alanine and cysteine, to avoid such errors it has two additional distinct editing activities against alanine. One activity is designated as 'pretransfer' editing and involves the tRNA(Pro)-independent hydrolysis of activated Ala-AMP. The other activity is designated 'posttransfer' editing and involves deacylation of mischarged Ala-tRNA(Pro). The misacylated Cys-tRNA(Pro) is not edited by ProRS. In Kocuria rhizophila (strain ATCC 9341 / DSM 348 / NBRC 103217 / DC2201), this protein is Proline--tRNA ligase.